A 74-amino-acid chain; its full sequence is Protein SlyX homolog (74 aa).

The disordered stretch occupies residues 54-74; it reads QDRNPDAQEPYSLRDEIPPHY.

It belongs to the SlyX family.

The protein is Protein SlyX homolog of Neisseria gonorrhoeae (strain ATCC 700825 / FA 1090).